A 435-amino-acid polypeptide reads, in one-letter code: GTPase Obg (435 aa).

One can recognise an Obg domain in the interval 6-164 (ADFVDRVKIF…RWLELELKIL (159 aa)). The 171-residue stretch at 165–335 (ADVGLVGYPN…LVSKLASIVR (171 aa)) folds into the OBG-type G domain. GTP-binding positions include 171-178 (GYPNVGKS), 196-200 (FTTLI), 217-220 (DIPG), 287-290 (NKID), and 316-318 (SAV). Mg(2+)-binding residues include Ser-178 and Thr-198. One can recognise an OCT domain in the interval 357 to 435 (RRLPEKFHLE…IGDFEFEYRE (79 aa)).

It belongs to the TRAFAC class OBG-HflX-like GTPase superfamily. OBG GTPase family. Monomer. Requires Mg(2+) as cofactor.

The protein localises to the cytoplasm. Functionally, an essential GTPase which binds GTP, GDP and possibly (p)ppGpp with moderate affinity, with high nucleotide exchange rates and a fairly low GTP hydrolysis rate. Plays a role in control of the cell cycle, stress response, ribosome biogenesis and in those bacteria that undergo differentiation, in morphogenesis control. The polypeptide is GTPase Obg (Thermotoga petrophila (strain ATCC BAA-488 / DSM 13995 / JCM 10881 / RKU-1)).